Here is a 138-residue protein sequence, read N- to C-terminus: Putative pre-16S rRNA nuclease (138 aa).

It belongs to the YqgF nuclease family.

The protein localises to the cytoplasm. Could be a nuclease involved in processing of the 5'-end of pre-16S rRNA. This Bacillus subtilis (strain 168) protein is Putative pre-16S rRNA nuclease (yrrK).